A 406-amino-acid chain; its full sequence is Sensor histidine kinase YxjM (406 aa).

The Cytoplasmic segment spans residues 1-13; it reads MNGQTPARHYYKK. A helical transmembrane segment spans residues 14 to 34; it reads LVPSLILILNCIQFLSHPTKA. The Extracellular segment spans residues 35–36; the sequence is DP. The helical transmembrane segment at 37–57 threads the bilayer; sequence ILLAFVFAVYLAFIWIIPYVA. Position 58 (Ser-58) is a topological domain, cytoplasmic. The next 2 membrane-spanning stretches (helical) occupy residues 59-79 and 80-100; these read TAVS…FWAV and SGQE…YAAF. A topological domain (cytoplasmic) is located at residue Arg-101. A helical membrane pass occupies residues 102–122; that stretch reads LPSRLSLIFTACLIGGNILLL. Residues 123 to 125 lie on the Extracellular side of the membrane; the sequence is SSQ. The chain crosses the membrane as a helical span at residues 126–146; that stretch reads GGSLNTIISNISIMLGLYVLF. At 147 to 406 the chain is on the cytoplasmic side; sequence SSMRFRREAR…TNKEQKDEQR (260 aa). The Histidine kinase domain maps to 209–396; it reads DIHDSIGHEL…KIELSLPLMT (188 aa). His-211 carries the post-translational modification Phosphohistidine; by autocatalysis.

It is found in the cell membrane. It carries out the reaction ATP + protein L-histidine = ADP + protein N-phospho-L-histidine.. Probable member of the two-component regulatory system YxjM/YxjL. May activate YxjL by phosphorylation. In Bacillus subtilis (strain 168), this protein is Sensor histidine kinase YxjM (yxjM).